Reading from the N-terminus, the 513-residue chain is Xylose import ATP-binding protein XylG (513 aa).

2 consecutive ABC transporter domains span residues 5-242 (LEMK…VERE) and 259-505 (LRIE…LRSE). Residue 37-44 (GENGSGKS) participates in ATP binding.

The protein belongs to the ABC transporter superfamily. Xylose importer (TC 3.A.1.2.4) family. In terms of assembly, the complex is composed of two ATP-binding proteins (XylG), two transmembrane proteins (XylH) and a solute-binding protein (XylF).

Its subcellular location is the cell inner membrane. It catalyses the reaction D-xylose(out) + ATP + H2O = D-xylose(in) + ADP + phosphate + H(+). Part of the ABC transporter complex XylFGH involved in xylose import. Responsible for energy coupling to the transport system. The protein is Xylose import ATP-binding protein XylG of Shigella flexneri.